The following is a 216-amino-acid chain: Serine acetyltransferase (216 aa).

This sequence belongs to the transferase hexapeptide repeat family.

The protein resides in the cytoplasm. The enzyme catalyses L-serine + acetyl-CoA = O-acetyl-L-serine + CoA. It functions in the pathway amino-acid biosynthesis; L-cysteine biosynthesis; L-cysteine from L-serine: step 1/2. This chain is Serine acetyltransferase (cysE), found in Staphylococcus xylosus.